Consider the following 293-residue polypeptide: Ribosomal protein L11 methyltransferase (293 aa).

S-adenosyl-L-methionine is bound by residues Thr145, Gly166, Asp188, and Asn230.

This sequence belongs to the methyltransferase superfamily. PrmA family.

The protein resides in the cytoplasm. It catalyses the reaction L-lysyl-[protein] + 3 S-adenosyl-L-methionine = N(6),N(6),N(6)-trimethyl-L-lysyl-[protein] + 3 S-adenosyl-L-homocysteine + 3 H(+). Functionally, methylates ribosomal protein L11. The protein is Ribosomal protein L11 methyltransferase of Shewanella denitrificans (strain OS217 / ATCC BAA-1090 / DSM 15013).